The following is a 95-amino-acid chain: Protein J1 homolog (95 aa).

It belongs to the chordopoxvirinae J1 family. In terms of assembly, homodimer. Part of a complex composed of A30, G7, F10 kinase, A15, D2, D3, and J1. Interacts with A45.

It is found in the virion. The protein localises to the host cytoplasm. Functionally, late protein which is a part of a large complex required for early virion morphogenesis. This complex participates in the formation of virosomes and the incorporation of virosomal contents into nascent immature virions. J1 protein is required for DNA packaging during immature virions (IV) formation. The sequence is that of Protein J1 homolog from Sus scrofa (Pig).